The following is a 332-amino-acid chain: Glyoxylate reductase (332 aa).

NADP(+) is bound by residues 155-158 (MGRI) and 236-238 (TSR). Active-site residues include Arg-238 and Glu-267. His-286 (proton donor) is an active-site residue. NADP(+) is bound at residue 286–288 (HAA).

The protein belongs to the D-isomer specific 2-hydroxyacid dehydrogenase family. GyaR subfamily. Homodimer.

Its subcellular location is the cytoplasm. The enzyme catalyses glycolate + NAD(+) = glyoxylate + NADH + H(+). This Korarchaeum cryptofilum (strain OPF8) protein is Glyoxylate reductase.